Reading from the N-terminus, the 785-residue chain is 1-phosphatidylinositol 4,5-bisphosphate phosphodiesterase delta-3 (785 aa).

The segment at M1–G43 is disordered. The PH domain maps to S65 to A168. The segment at K69–P97 is substrate binding. S101 bears the Phosphoserine mark. EF-hand domains lie at R178–D213, M214–R249, and L246–D281. Residues D191, D193, D195, K197, E202, D227, S229, N231, R233, and E238 each coordinate Ca(2+). The PI-PLC X-box domain maps to Q333 to K478. H348 is a catalytic residue. Ca(2+) contacts are provided by N349, E378, and D380. H393 is an active-site residue. Residue E427 coordinates Ca(2+). K476 and K478 together coordinate substrate. Residues R484–D493 are compositionally biased toward basic and acidic residues. The interval R484–A517 is disordered. S492 carries the phosphoserine modification. Positions R494–E509 are enriched in acidic residues. The 117-residue stretch at L524–R640 folds into the PI-PLC Y-box domain. S553 serves as a coordination point for substrate. S569 is subject to Phosphoserine. R580 lines the substrate pocket. Residues P636 to S765 enclose the C2 domain. I679, D681, N705, D734, Y735, and D736 together coordinate Ca(2+).

Requires Ca(2+) as cofactor. As to expression, expressed in cerebellum and cerebral cortex.

The protein resides in the membrane. Its subcellular location is the cytoplasm. It localises to the cleavage furrow. The catalysed reaction is a 1,2-diacyl-sn-glycero-3-phospho-(1D-myo-inositol-4,5-bisphosphate) + H2O = 1D-myo-inositol 1,4,5-trisphosphate + a 1,2-diacyl-sn-glycerol + H(+). Its activity is regulated as follows. Strongly activated by phosphatidic acid. Inhibited by phosphatidylethanolamine (PtdEtn), phosphatidylcholine (PtdCho), sphingomyelin and phosphatidylserine (PtdSer). Functionally, hydrolyzes the phosphatidylinositol 4,5-bisphosphate (PIP2) to generate 2 second messenger molecules diacylglycerol (DAG) and inositol 1,4,5-trisphosphate (IP3). DAG mediates the activation of protein kinase C (PKC), while IP3 releases Ca(2+) from intracellular stores. Essential for trophoblast and placental development. May participate in cytokinesis by hydrolyzing PIP2 at the cleavage furrow. Regulates neurite outgrowth through the inhibition of RhoA/Rho kinase signaling. The polypeptide is 1-phosphatidylinositol 4,5-bisphosphate phosphodiesterase delta-3 (Mus musculus (Mouse)).